The sequence spans 187 residues: MILSDRDIRSAIDSGHLGISPFDPTMVQPSSIDVRLDRYFRVFNNARYTHIDPKQEQEDLTSLVEVKEGDAFILHPGEFVLGSTLEEFALPADLAGRLEGKSSLGRLGLLTHSTAGFIDPGFNGYITFELSNASNLPIALYPEMKVGQLALFMMSSPAETPYGSGSLGSKYQGQRGPTASKAYMNFR.

Residues 101–106 (KSSLGR) and Asp119 each bind dCTP. Glu129 serves as the catalytic Proton donor/acceptor. 3 residues coordinate dCTP: Gln148, Tyr162, and Gln174.

This sequence belongs to the dCTP deaminase family. As to quaternary structure, homotrimer.

It catalyses the reaction dCTP + 2 H2O = dUMP + NH4(+) + diphosphate. Its pathway is pyrimidine metabolism; dUMP biosynthesis; dUMP from dCTP: step 1/1. Functionally, bifunctional enzyme that catalyzes both the deamination of dCTP to dUTP and the hydrolysis of dUTP to dUMP without releasing the toxic dUTP intermediate. This chain is dCTP deaminase, dUMP-forming, found in Corynebacterium kroppenstedtii (strain DSM 44385 / JCM 11950 / CIP 105744 / CCUG 35717).